We begin with the raw amino-acid sequence, 124 residues long: Ribonuclease P protein component (124 aa).

It belongs to the RnpA family. As to quaternary structure, consists of a catalytic RNA component (M1 or rnpB) and a protein subunit.

It carries out the reaction Endonucleolytic cleavage of RNA, removing 5'-extranucleotides from tRNA precursor.. RNaseP catalyzes the removal of the 5'-leader sequence from pre-tRNA to produce the mature 5'-terminus. It can also cleave other RNA substrates such as 4.5S RNA. The protein component plays an auxiliary but essential role in vivo by binding to the 5'-leader sequence and broadening the substrate specificity of the ribozyme. The polypeptide is Ribonuclease P protein component (Mycolicibacterium gilvum (strain PYR-GCK) (Mycobacterium gilvum (strain PYR-GCK))).